A 301-amino-acid chain; its full sequence is Probable 5-dehydro-4-deoxyglucarate dehydratase (301 aa).

It belongs to the DapA family.

It catalyses the reaction 5-dehydro-4-deoxy-D-glucarate + H(+) = 2,5-dioxopentanoate + CO2 + H2O. The protein operates within carbohydrate acid metabolism; D-glucarate degradation; 2,5-dioxopentanoate from D-glucarate: step 2/2. The protein is Probable 5-dehydro-4-deoxyglucarate dehydratase of Chelativorans sp. (strain BNC1).